Consider the following 277-residue polypeptide: RsbT co-antagonist protein RsbRB (277 aa).

An STAS domain is found at 165–276 (SSPVITLSKS…TNLAQALNYH (112 aa)). The residue at position 186 (threonine 186) is a Phosphothreonine.

Interacts with RsbRA and RsbS in the stressosome. The stressosome probably also contains RsbRC and RsbRD. In terms of processing, phosphorylated by RsbT.

One of 4 functionally non-identical RsbR paralogs, it functions in the environmental signaling branch of the general stress response. In terms of biological role, negative regulator of sigma-B activity. Non-phosphorylated RsbS binds to RsbT, preventing its association with RsbU. Requires any one of RsbRA, RsbRB, RsbRC or RsbRD to sequester RsbT. When RsbS and the RsbR paralog(s) are phosphorylated, they release RsbT, which can then bind and activate RsbU. The sequence is that of RsbT co-antagonist protein RsbRB (rsbRB) from Bacillus subtilis (strain 168).